The chain runs to 48 residues: Sperm protamine P1 (48 aa).

The protein belongs to the protamine P1 family. In terms of tissue distribution, testis.

It is found in the nucleus. The protein localises to the chromosome. Functionally, protamines substitute for histones in the chromatin of sperm during the haploid phase of spermatogenesis. They compact sperm DNA into a highly condensed, stable and inactive complex. This chain is Sperm protamine P1 (PRM1), found in Corynorhinus townsendii (Townsend's big-eared bat).